Here is a 398-residue protein sequence, read N- to C-terminus: Phosphoglycerate kinase (398 aa).

Residues 21–23, R36, 59–62, R119, and R157 contribute to the substrate site; these read DFN and HLGR. Residues K208, G296, E327, and 354 to 357 contribute to the ATP site; that span reads GGDS.

This sequence belongs to the phosphoglycerate kinase family. Monomer.

Its subcellular location is the cytoplasm. It carries out the reaction (2R)-3-phosphoglycerate + ATP = (2R)-3-phospho-glyceroyl phosphate + ADP. Its pathway is carbohydrate degradation; glycolysis; pyruvate from D-glyceraldehyde 3-phosphate: step 2/5. This is Phosphoglycerate kinase from Lactococcus lactis subsp. cremoris (strain SK11).